We begin with the raw amino-acid sequence, 538 residues long: Retinoblastoma-binding protein 5 (538 aa).

WD repeat units follow at residues 22 to 63 (DCIS…KIIS) and 64 to 103 (AHIH…CDQR). A Glycyl lysine isopeptide (Lys-Gly) (interchain with G-Cter in SUMO2) cross-link involves residue K129. 4 WD repeats span residues 148-188 (DDDS…LVAS), 196-235 (SNTT…TCGR), 249-291 (VNRT…KILH), and 293-331 (TRGE…NWSA). T252 is subject to Phosphothreonine; by CDK1. The interaction with ASH2L stretch occupies residues 330 to 366 (SAFAPDFKELDENVEYEERESEFDIEDEDKSEPEQTG). Acidic residues predominate over residues 344-360 (EYEERESEFDIEDEDKS). A disordered region spans residues 344–377 (EYEERESEFDIEDEDKSEPEQTGADAAEDEEVDV). S350 bears the Phosphoserine mark. The interaction with WDR5 stretch occupies residues 371 to 380 (EDEEVDVTSV). Residues S388 and S389 each carry the phosphoserine modification. Positions 408-519 (VEDPEENPYG…LPLEGSTKGK (112 aa)) are disordered. The span at 479–490 (SKKKQAGRPKGS) shows a compositional bias: basic residues. Positions 491-510 (KGKEKDSPFKPKLYKGDRGL) are enriched in basic and acidic residues. S497 carries the post-translational modification Phosphoserine; by CDK1. Position 525 is a phosphoserine (S525).

Component of the SET1 complex, at least composed of the catalytic subunit (SETD1A or SETD1B), WDR5, WDR82, RBBP5, ASH2L/ASH2, CXXC1/CFP1, HCFC1 and DPY30. Core component of several methyltransferase-containing complexes including MLL1/MLL, MLL2/3 (also named ASCOM complex) and MLL4/WBP7. Each complex is at least composed of ASH2L, RBBP5, WDR5, DPY30, one or more specific histone methyltransferases (KMT2A/MLL1, KMT2D/MLL2, KMT2C/MLL3 and KMT2B/MLL4), and the facultative components PAGR1, BACC1, CHD8, E2F6, HCFC1, HCFC2, HSP70, INO80C, KDM6A, KANSL1, LAS1L, MAX, MCRS1, MEN1, MGA, MYST1/MOF, NCOA6, PAXIP1/PTIP, PELP1, PHF20, PRP31, RING2, RUVB1/TIP49A, RUVB2/TIP49B, SENP3, TAF1, TAF4, TAF6, TAF7, TAF9, TEX10 and alpha- and beta-tubulin. Component of a histone methylation complex composed of at least ZNF335, RBBP5, ASH2L and WDR5; the complex may have histone H3-specific methyltransferase activity, however does not have specificity for 'Lys-4' of histone H3. Interacts with ZNF335. Interacts with ASH2L; the interaction is direct. Interacts with WDR5; the interaction is direct. Components of the ZNF335-RBBP5-ASH2L-WDR5 histone methylation complex may associate with components of a nuclear receptor-mediated transcription complex to form a complex at least composed of ZNF335, HCFC1, CCAR2, EMSY, MKI67, RBBP5, ASH2L and WDR5. Within this complex interacts with EMSY. Found in a complex with RBBP5, ASH2L, DPY30, KMT2A, KMT2D and WDR5. Interacts with SETD1A. Interacts with WDR82.

The protein localises to the nucleus. Its function is as follows. In embryonic stem (ES) cells, plays a crucial role in the differentiation potential, particularly along the neural lineage, regulating gene induction and H3 'Lys-4' methylation at key developmental loci, including that mediated by retinoic acid. Does not affect ES cell self-renewal. Component or associated component of some histone methyltransferase complexes which regulates transcription through recruitment of those complexes to gene promoters. As part of the MLL1/MLL complex, involved in mono-, di- and trimethylation at 'Lys-4' of histone H3. Histone H3 'Lys-4' methylation represents a specific tag for epigenetic transcriptional activation. In association with ASH2L and WDR5, stimulates the histone methyltransferase activities of KMT2A, KMT2B, KMT2C, KMT2D, SETD1A and SETD1B. The polypeptide is Retinoblastoma-binding protein 5 (Rbbp5) (Mus musculus (Mouse)).